The following is a 638-amino-acid chain: Trichohyalin-like protein 1 (638 aa).

The region spanning 49-84 is the EF-hand domain; sequence HVFHAVERKLNLLNFDRDGTISFEEFVLAIFSLLNP. The disordered stretch occupies residues 134 to 638; that stretch reads SEMASSGQPS…ALEAESLEAQ (505 aa). The segment covering 166–179 has biased composition (polar residues); it reads LPRNVSEPNDPENQ. 3 stretches are compositionally biased toward basic and acidic residues: residues 221 to 246, 294 to 309, and 318 to 328; these read IPRE…QRPT, DDTK…KDAG, and EEPKADAKVAE. The span at 343 to 357 shows a compositional bias: polar residues; sequence DQSVQSRSRNVSETS. 6 stretches are compositionally biased toward basic and acidic residues: residues 358–372, 395–409, 419–435, 479–490, 526–548, and 622–631; these read SRGE…HERI, REND…KDPS, EIKE…HSEE, RIQDKPVRKEDH, AEPH…KQES, and AGRENRKALE.

Belongs to the S-100 family.

In Mus musculus (Mouse), this protein is Trichohyalin-like protein 1 (Tchhl1).